Reading from the N-terminus, the 124-residue chain is Small ribosomal subunit protein uS12 (124 aa).

The tract at residues 1–25 is disordered; it reads MATINQLVRKPRQASTYKSASPALD.

The protein belongs to the universal ribosomal protein uS12 family. In terms of assembly, part of the 30S ribosomal subunit. Contacts proteins S8 and S17. May interact with IF1 in the 30S initiation complex.

Functionally, with S4 and S5 plays an important role in translational accuracy. In terms of biological role, interacts with and stabilizes bases of the 16S rRNA that are involved in tRNA selection in the A site and with the mRNA backbone. Located at the interface of the 30S and 50S subunits, it traverses the body of the 30S subunit contacting proteins on the other side and probably holding the rRNA structure together. The combined cluster of proteins S8, S12 and S17 appears to hold together the shoulder and platform of the 30S subunit. This is Small ribosomal subunit protein uS12 from Xylella fastidiosa (strain 9a5c).